Here is a 329-residue protein sequence, read N- to C-terminus: GTP 3',8-cyclase (329 aa).

The Radical SAM core domain maps to 8 to 234; it reads AFARKFYYLR…QLRSRADGPA (227 aa). Arg-17 provides a ligand contact to GTP. Positions 24 and 28 each coordinate [4Fe-4S] cluster. Tyr-30 serves as a coordination point for S-adenosyl-L-methionine. A [4Fe-4S] cluster-binding site is contributed by Cys-31. Arg-68 is a binding site for GTP. Gly-72 contributes to the S-adenosyl-L-methionine binding site. Thr-99 contacts GTP. Ser-123 serves as a coordination point for S-adenosyl-L-methionine. GTP is bound at residue Lys-160. Position 194 (Met-194) interacts with S-adenosyl-L-methionine. [4Fe-4S] cluster is bound by residues Cys-257 and Cys-260. 262 to 264 provides a ligand contact to GTP; that stretch reads RLR. Position 274 (Cys-274) interacts with [4Fe-4S] cluster.

It belongs to the radical SAM superfamily. MoaA family. In terms of assembly, monomer and homodimer. The cofactor is [4Fe-4S] cluster.

It catalyses the reaction GTP + AH2 + S-adenosyl-L-methionine = (8S)-3',8-cyclo-7,8-dihydroguanosine 5'-triphosphate + 5'-deoxyadenosine + L-methionine + A + H(+). Its pathway is cofactor biosynthesis; molybdopterin biosynthesis. In terms of biological role, catalyzes the cyclization of GTP to (8S)-3',8-cyclo-7,8-dihydroguanosine 5'-triphosphate. The chain is GTP 3',8-cyclase from Cronobacter sakazakii (strain ATCC BAA-894) (Enterobacter sakazakii).